A 494-amino-acid polypeptide reads, in one-letter code: Ketol-acid reductoisomerase (NADP(+)) (494 aa).

A KARI N-terminal Rossmann domain is found at 14 to 208 (LDQLGRCRFM…GGHRAGCLES (195 aa)). Residues 45 to 48 (CGAQ), R68, R76, S78, and 108 to 110 (DKQ) each bind NADP(+). The active site involves H132. G158 is an NADP(+) binding site. 2 KARI C-terminal knotted domains span residues 209-344 (SFVA…NYPD) and 345-487 (SSLE…MTDM). Mg(2+)-binding residues include D217, E221, E389, and E393. S414 is a substrate binding site.

This sequence belongs to the ketol-acid reductoisomerase family. Mg(2+) is required as a cofactor.

The catalysed reaction is (2R)-2,3-dihydroxy-3-methylbutanoate + NADP(+) = (2S)-2-acetolactate + NADPH + H(+). It carries out the reaction (2R,3R)-2,3-dihydroxy-3-methylpentanoate + NADP(+) = (S)-2-ethyl-2-hydroxy-3-oxobutanoate + NADPH + H(+). Its pathway is amino-acid biosynthesis; L-isoleucine biosynthesis; L-isoleucine from 2-oxobutanoate: step 2/4. The protein operates within amino-acid biosynthesis; L-valine biosynthesis; L-valine from pyruvate: step 2/4. Its function is as follows. Involved in the biosynthesis of branched-chain amino acids (BCAA). Catalyzes an alkyl-migration followed by a ketol-acid reduction of (S)-2-acetolactate (S2AL) to yield (R)-2,3-dihydroxy-isovalerate. In the isomerase reaction, S2AL is rearranged via a Mg-dependent methyl migration to produce 3-hydroxy-3-methyl-2-ketobutyrate (HMKB). In the reductase reaction, this 2-ketoacid undergoes a metal-dependent reduction by NADPH to yield (R)-2,3-dihydroxy-isovalerate. In Aliivibrio salmonicida (strain LFI1238) (Vibrio salmonicida (strain LFI1238)), this protein is Ketol-acid reductoisomerase (NADP(+)).